The following is a 569-amino-acid chain: Sulfite reductase [NADPH] hemoprotein beta-component (569 aa).

Residues C433, C439, C478, and C482 each coordinate [4Fe-4S] cluster. C482 contacts siroheme.

Belongs to the nitrite and sulfite reductase 4Fe-4S domain family. Alpha(8)-beta(8). The alpha component is a flavoprotein, the beta component is a hemoprotein. The cofactor is siroheme. It depends on [4Fe-4S] cluster as a cofactor.

It carries out the reaction hydrogen sulfide + 3 NADP(+) + 3 H2O = sulfite + 3 NADPH + 4 H(+). Its pathway is sulfur metabolism; hydrogen sulfide biosynthesis; hydrogen sulfide from sulfite (NADPH route): step 1/1. Component of the sulfite reductase complex that catalyzes the 6-electron reduction of sulfite to sulfide. This is one of several activities required for the biosynthesis of L-cysteine from sulfate. In Buchnera aphidicola subsp. Acyrthosiphon pisum (strain 5A), this protein is Sulfite reductase [NADPH] hemoprotein beta-component.